The chain runs to 355 residues: MGCRQSSEEKEAARRSRRIDRHLRSESQRQRREIKLLLLGTSNSGKSTIVKQMKIIHSGGFNLEACKEYKPLIIYNAIDSLTRIIRALAALRIDFHNPDRAYDAVQLFALTGPAESKGEITPELLGVMRRLWADPGAQACFSRSSEYHLEDNAAYYLNDLERIAAADYIPTVEDILRSRDMTTGIVENKFTFKELTFKMVDVGGQRSERKKWIHCFEGVTAIIFCVELSGYDLKLYEDNQTSRMAESLRLFDSICNNNWFINTSLILFLNKKDLLAEKIRRIPLTICFPEYKGQNTYEEAAVYIQRQFEDLNRNKETKEIYSHFTCATDTSNIQFVFDAVTDVIIQNNLKYIGLC.

The span at 1–14 (MGCRQSSEEKEAAR) shows a compositional bias: basic and acidic residues. Positions 1 to 26 (MGCRQSSEEKEAARRSRRIDRHLRSE) are disordered. Glycine 2 carries the N-myristoyl glycine lipid modification. A lipid anchor (S-palmitoyl cysteine) is attached at cysteine 3. The G-alpha domain maps to 32–355 (REIKLLLLGT…QNNLKYIGLC (324 aa)). The G1 motif stretch occupies residues 35-48 (KLLLLGTSNSGKST). GTP is bound by residues 40-47 (GTSNSGKS), 176-182 (LRSRDMT), 201-205 (DVGGQ), 270-273 (NKKD), and alanine 327. Serine 47 contributes to the Mg(2+) binding site. The segment at 174-182 (DILRSRDMT) is G2 motif. Arginine 179 is modified (ADP-ribosylarginine; by cholera toxin). Threonine 182 is a binding site for Mg(2+). The segment at 197-206 (FKMVDVGGQR) is G3 motif. A G4 motif region spans residues 266-273 (ILFLNKKD). A G5 motif region spans residues 325-330 (TCATDT).

It belongs to the G-alpha family. G(i/o/t/z) subfamily. In terms of assembly, G-proteins are composed of 3 units; alpha, beta and gamma. The alpha chain contains the guanine nucleotide binding site. Interacts with ADGRB2.

The protein localises to the membrane. Its function is as follows. Guanine nucleotide-binding proteins (G proteins) are involved as modulators or transducers in various transmembrane signaling systems. The polypeptide is Guanine nucleotide-binding protein G(z) subunit alpha (GNAZ) (Homo sapiens (Human)).